We begin with the raw amino-acid sequence, 412 residues long: Maintenance of mitochondrial morphology protein 1 (412 aa).

At 1–19 (MAQDVCPTRSEPSLSFLQG) the chain is on the lumenal side. Residues 20-40 (LILGQLSVVLLIAAFIKFFIF) traverse the membrane as a helical segment. Residues 41-412 (GEAPSAEETA…GSLPGIDMPT (372 aa)) lie on the Cytoplasmic side of the membrane. An SMP-LTD domain is found at 121–337 (QPESLDWFNV…EPRFQEIELP (217 aa)). Residues 372-384 (ARQELDTETDGLR) show a composition bias toward basic and acidic residues. Positions 372 to 412 (ARQELDTETDGLRYRRRPVGDDTYSVSGSMPGSLPGIDMPT) are disordered.

This sequence belongs to the MMM1 family. As to quaternary structure, homodimer. Component of the ER-mitochondria encounter structure (ERMES) or MDM complex, composed of MMM1, MDM10, MDM12 and MDM34. An MMM1 homodimer associates with one molecule of MDM12 on each side in a pairwise head-to-tail manner, and the SMP-LTD domains of MMM1 and MDM12 generate a continuous hydrophobic tunnel for phospholipid trafficking.

It is found in the endoplasmic reticulum membrane. In terms of biological role, component of the ERMES/MDM complex, which serves as a molecular tether to connect the endoplasmic reticulum (ER) and mitochondria. Components of this complex are involved in the control of mitochondrial shape and protein biogenesis, and function in nonvesicular lipid trafficking between the ER and mitochondria. The MDM12-MMM1 subcomplex functions in the major beta-barrel assembly pathway that is responsible for biogenesis of all outer membrane beta-barrel proteins, and acts in a late step after the SAM complex. The MDM10-MDM12-MMM1 subcomplex further acts in the TOM40-specific pathway after the action of the MDM12-MMM1 complex. Essential for establishing and maintaining the structure of mitochondria and maintenance of mtDNA nucleoids. The chain is Maintenance of mitochondrial morphology protein 1 from Podospora anserina (strain S / ATCC MYA-4624 / DSM 980 / FGSC 10383) (Pleurage anserina).